Reading from the N-terminus, the 222-residue chain is CASP-like protein 1E1 (222 aa).

Over Met1–Cys59 the chain is Cytoplasmic. Residues Ser60–Val80 form a helical membrane-spanning segment. Topologically, residues Asp81–Ser110 are extracellular. N-linked (GlcNAc...) asparagine glycosylation occurs at Asn105. A helical membrane pass occupies residues Ala111 to Ala131. Residues Ala132–Asp146 are Cytoplasmic-facing. The chain crosses the membrane as a helical span at residues Leu147 to Gly167. Topologically, residues Glu168 to Arg189 are extracellular. The chain crosses the membrane as a helical span at residues Ala190–Leu210. Residues Asn211–Tyr222 lie on the Cytoplasmic side of the membrane.

The protein belongs to the Casparian strip membrane proteins (CASP) family. As to quaternary structure, homodimer and heterodimers.

The protein resides in the cell membrane. The sequence is that of CASP-like protein 1E1 from Sorghum bicolor (Sorghum).